A 271-amino-acid polypeptide reads, in one-letter code: uncharacterized protein (271 aa).

Helical transmembrane passes span 11-33 (GWLA…LAPW), 172-194 (SINT…LQLI), and 214-236 (FLSY…GYFA). The tract at residues 245–271 (REKAGSPPPDKPMTVEQKLADRYGRRR) is disordered. A compositionally biased stretch (basic and acidic residues) spans 262-271 (KLADRYGRRR).

It belongs to the SURF1 family.

It localises to the cell membrane. This is an uncharacterized protein from Mycobacterium tuberculosis (strain CDC 1551 / Oshkosh).